The sequence spans 705 residues: Pentatricopeptide repeat-containing protein At1g09410, mitochondrial (705 aa).

The N-terminal 11 residues, 1–11 (MKSQILLRRTY), are a transit peptide targeting the mitochondrion. PPR repeat units follow at residues 16-46 (PPPTANVRITHLSRIGKIHEARKLFDSCDSK), 47-77 (SISSWNSMVAGYFANLMPRDARKLFDEMPDR), 78-112 (NIISWNGLVSGYMKNGEIDEARKVFDLMPERNVVS), 113-139 (WTALVKGYVHNGKVDVAESLFWKMPEK), 140-170 (NKVSWTVMLIGFLQDGRIDDACKLYEMIPDK), 171-205 (DNIARTSMIHGLCKEGRVDEAREIFDEMSERSVIT), 206-232 (WTTMVTGYGQNNRVDDARKIFDVMPEK), 233-267 (TEVSWTSMLMGYVQNGRIEDAEELFEVMPVKPVIA), 268-294 (CNAMISGLGQKGEIAKARRVFDSMKER), 295-329 (NDASWQTVIKIHERNGFELEALDLFILMQKQGVRP), 330-364 (TFPTLISILSVCASLASLHHGKQVHAQLVRCQFDV), 365-395 (DVYVASVLMTMYIKCGELVKSKLIFDRFPSK), 396-430 (DIIMWNSIISGYASHGLGEEALKVFCEMPLSGSTK), 432-462 (NEVTFVATLSACSYAGMVEEGLKIYESMESV), and 468-498 (ITAHYACMVDMLGRAGRFNEAMEMIDSMTVE). The type E motif stretch occupies residues 503–578 (VWGSLLGACR…SPGCSWTEVE (76 aa)). The tract at residues 579 to 610 (NKVHAFTRGGINSHPEQESILKILDELDGLLR) is type E(+) motif. The segment at 611–705 (EAGYNPDCSY…NGECSCKDYW (95 aa)) is type DYW motif.

The protein belongs to the PPR family. PCMP-H subfamily.

It is found in the mitochondrion. This is Pentatricopeptide repeat-containing protein At1g09410, mitochondrial (PCMP-H18) from Arabidopsis thaliana (Mouse-ear cress).